The chain runs to 416 residues: MTLKTIRGKALMGAALCATMLTFSGQAFADAELKIFVSSQHQPDIWRKALDQYEAKTPGVKVVIETGGNTSEMQAQYLNTVMSAKDSSLDVLMLDVIRPAQFATAGWTSDFSGKDLSAYLPTYAEANTVNGKIVALPAFADSMFLYYRKDLLDKYGIKPPTTWDELKEASKKVMEGEKNPELQGLSFQGKAIEGAVCTFLLPYWSEGKSLVENGKLNFDNKAAVDSLKLWKSFVDDGISKKNISEVATDDTRKEFQAGKVLFAVNWSYAWTHFQGKESQVNDKVGVARLPAVKGGEQTTCLGGWEFGVSAYSKQQDEAKKLVEYLSSQDVSKFMAINAALLPTYAALYKDADVTKTIPWFADALPVVETAKARPVTPRYNEVSETIRTTVNGVLAGVMTPEDGAKQMESRLRRVLR.

An N-terminal signal peptide occupies residues 1 to 29 (MTLKTIRGKALMGAALCATMLTFSGQAFA). Gln40 serves as a coordination point for 3-(6-sulfo-alpha-D-quinovosyl)glycerol. His41 contributes to the 6-sulfo-D-quinovose binding site. Ser71, Asp95, Asp141, Gly194, Thr248, Gly303, Trp304, and Arg373 together coordinate 3-(6-sulfo-alpha-D-quinovosyl)glycerol. 3 residues coordinate 6-sulfo-D-quinovose: Gly303, Trp304, and Arg373.

Belongs to the bacterial solute-binding protein 1 family. The complex is probably composed of two ATP-binding proteins (SmoE), two transmembrane proteins (SmoG and SmoH) and a solute-binding protein (SmoF).

Its subcellular location is the periplasm. In terms of biological role, part of the ABC transporter complex SmoEFGH involved in sulfoquinovosyl glycerol (SQGro) uptake. Binds sulfoquinovosyl glycerol (SQGro). Can also bind sulfoquinovose (SQ), methyl alpha-sulfoquinovoside (SQMe) and a short-chain derivative of sulfoquinovosyl diacylglycerol (SQDG). Cannot bind D-glucose and D-glucuronic acid. This is Sulfoquinovosyl glycerol-binding protein SmoF from Agrobacterium fabrum (strain C58 / ATCC 33970) (Agrobacterium tumefaciens (strain C58)).